Here is a 190-residue protein sequence, read N- to C-terminus: dCTP deaminase (190 aa).

DCTP-binding positions include 111-116, 135-137, Gln-156, Tyr-172, and Gln-182; these read KSTYAR and TLE. The active-site Proton donor/acceptor is the Glu-137.

It belongs to the dCTP deaminase family. Homotrimer.

It carries out the reaction dCTP + H2O + H(+) = dUTP + NH4(+). It functions in the pathway pyrimidine metabolism; dUMP biosynthesis; dUMP from dCTP (dUTP route): step 1/2. In terms of biological role, catalyzes the deamination of dCTP to dUTP. This chain is dCTP deaminase, found in Stenotrophomonas maltophilia (strain K279a).